The sequence spans 1575 residues: Ovochymase (1575 aa).

The first 19 residues, 1 to 19 (MIVTFVALALSCCTPQVTA), serve as a signal peptide directing secretion. One can recognise a Peptidase S1 1 domain in the interval 36-280 (IVGGEMAKLG…YSSWIANYTQ (245 aa)). The cysteines at positions 61 and 77 are disulfide-linked. Catalysis depends on charge relay system residues His76 and Asp132. 3 disulfides stabilise this stretch: Cys166–Cys233, Cys199–Cys212, and Cys223–Cys256. Ser227 (charge relay system) is an active-site residue. N-linked (GlcNAc...) asparagine glycans are attached at residues Asn277 and Asn303. 4 disulfide bridges follow: Cys300–Cys330, Cys358–Cys386, Cys432–Cys460, and Cys486–Cys507. 2 consecutive CUB domains span residues 300-423 (CSSN…FHAV) and 432-545 (CGGI…YYFS). N-linked (GlcNAc...) asparagine glycans are attached at residues Asn497, Asn513, and Asn549. Residues 575–810 (IVNGDIAIAG…YIDWIIATAN (236 aa)) form the Peptidase S1 2 domain. Cysteines 602 and 618 form a disulfide. Residues His617 and Asp665 each act as charge relay system in the active site. 3 disulfides stabilise this stretch: Cys700/Cys766, Cys730/Cys745, and Cys756/Cys786. Residue Asn748 is glycosylated (N-linked (GlcNAc...) asparagine). The active-site Charge relay system is the Ser760. Asn810 carries an N-linked (GlcNAc...) asparagine glycan. Cystine bridges form between Cys830–Cys859, Cys889–Cys913, Cys956–Cys984, Cys1012–Cys1034, Cys1080–Cys1108, Cys1135–Cys1158, and Cys1221–Cys1246. CUB domains follow at residues 830–949 (CIQL…YRLE), 956–1070 (CGQL…FVEL), 1080–1197 (CGGV…YTAV), and 1221–1341 (CQDS…YKLM). Asn968, Asn1027, Asn1087, and Asn1090 each carry an N-linked (GlcNAc...) asparagine glycan. Asn1273 carries N-linked (GlcNAc...) asparagine glycosylation. The Peptidase S1 3 domain maps to 1314 to 1575 (YNGGEISMLF…FLKWITKIIQ (262 aa)). 2 cysteine pairs are disulfide-bonded: Cys1376-Cys1392 and Cys1493-Cys1507. A glycan (N-linked (GlcNAc...) asparagine) is linked at Asn1511.

Belongs to the peptidase S1 family. As to expression, expressed in the testis and ovary. Expressed in the gonads and gametes. Expressed in the follicle cells covering the vitelline coat of ovarian egg.

The protein localises to the secreted. Its function is as follows. May be responsible for elevation of the vitelline coat at the late developmental stage of oogenesis and during fertilization in ovarian eggs. The protein is Ovochymase of Halocynthia roretzi (Sea squirt).